The primary structure comprises 428 residues: Cell division protein DamX (428 aa).

Residues 1 to 99 are disordered; that stretch reads MDEFKPEDEL…KRKKAASKPA (99 aa). Residues 1–103 are Cytoplasmic-facing; that stretch reads MDEFKPEDEL…AASKPASRQY (103 aa). 2 stretches are compositionally biased toward basic and acidic residues: residues 7–36 and 50–64; these read EDEL…ERGE and DDRR…RNEE. Residues 55-87 are a coiled coil; that stretch reads TRAQKERNEEPEIEEEIDESEDETVDEERVERR. The segment covering 65 to 82 has biased composition (acidic residues); that stretch reads PEIEEEIDESEDETVDEE. Residues 86 to 95 are compositionally biased toward basic residues; the sequence is RRPRKRKKAA. The chain crosses the membrane as a helical span at residues 104 to 124; the sequence is MMMGVGILVLLLLIIGIGSAL. Topologically, residues 125–428 are periplasmic; it reads KAPSTTSSDQ…PLRQVQADLK (304 aa). Disordered regions lie at residues 149 to 190 and 226 to 344; these read TDQA…VATD and EPAT…KSAP. The span at 236–257 shows a compositional bias: polar residues; sequence GNASRDTAKTQTAERPSTTRPA. Residues 288–334 are compositionally biased toward low complexity; that stretch reads PAAPVASTKAPAATSTPAPKETATTAPVQTASPAQTTATPAAGAKTA. Residues 342–419 enclose the SPOR domain; that stretch reads SAPSSHYTLQ…VQAKNPWAKP (78 aa).

Belongs to the DamX family. As to quaternary structure, interacts in vitro with multiple Fts proteins, including FtsQ and FtsN.

The protein localises to the cell inner membrane. Its function is as follows. Non-essential cell division protein. This chain is Cell division protein DamX, found in Escherichia coli (strain K12).